A 116-amino-acid polypeptide reads, in one-letter code: Proline-rich protein 9 (116 aa).

In Bos taurus (Bovine), this protein is Proline-rich protein 9 (PRR9).